Reading from the N-terminus, the 247-residue chain is Coproheme decarboxylase (247 aa).

Fe-coproporphyrin III-binding positions include Arg129, 143–147 (YPMDK), His170, Gln183, and Ser221. The active site involves Tyr143.

It belongs to the ChdC family. Type 1 subfamily. Fe-coproporphyrin III is required as a cofactor.

It carries out the reaction Fe-coproporphyrin III + 2 H2O2 + 2 H(+) = heme b + 2 CO2 + 4 H2O. The enzyme catalyses Fe-coproporphyrin III + H2O2 + H(+) = harderoheme III + CO2 + 2 H2O. The catalysed reaction is harderoheme III + H2O2 + H(+) = heme b + CO2 + 2 H2O. The protein operates within porphyrin-containing compound metabolism; protoheme biosynthesis. Involved in coproporphyrin-dependent heme b biosynthesis. Catalyzes the decarboxylation of Fe-coproporphyrin III (coproheme) to heme b (protoheme IX), the last step of the pathway. The reaction occurs in a stepwise manner with a three-propionate intermediate. This Bacillus cereus (strain B4264) protein is Coproheme decarboxylase.